Consider the following 535-residue polypeptide: Glutamate--cysteine ligase (535 aa).

This sequence belongs to the glutamate--cysteine ligase type 1 family. Type 1 subfamily.

The enzyme catalyses L-cysteine + L-glutamate + ATP = gamma-L-glutamyl-L-cysteine + ADP + phosphate + H(+). The protein operates within sulfur metabolism; glutathione biosynthesis; glutathione from L-cysteine and L-glutamate: step 1/2. The polypeptide is Glutamate--cysteine ligase (Pseudomonas syringae pv. syringae).